The chain runs to 171 residues: UPF0312 protein SE_0264 (171 aa).

The protein belongs to the UPF0312 family.

The polypeptide is UPF0312 protein SE_0264 (Staphylococcus epidermidis (strain ATCC 12228 / FDA PCI 1200)).